A 474-amino-acid chain; its full sequence is Probable protein phosphatase 2C 37 (474 aa).

Positions Met-1 to Ala-90 are disordered. Over residues Leu-57–Cys-77 the composition is skewed to low complexity. In terms of domain architecture, PPM-type phosphatase spans Ala-113–Leu-470. Residues Asp-152, Gly-153, and Asp-387 each coordinate Mn(2+). The tract at residues Leu-406–Ala-434 is disordered. The span at Ser-420–Ala-434 shows a compositional bias: low complexity. Asp-461 serves as a coordination point for Mn(2+).

It belongs to the PP2C family. It depends on Mg(2+) as a cofactor. Mn(2+) is required as a cofactor.

The catalysed reaction is O-phospho-L-seryl-[protein] + H2O = L-seryl-[protein] + phosphate. The enzyme catalyses O-phospho-L-threonyl-[protein] + H2O = L-threonyl-[protein] + phosphate. This chain is Probable protein phosphatase 2C 37, found in Oryza sativa subsp. japonica (Rice).